A 180-amino-acid chain; its full sequence is Secreted RxLR effector protein 5 (180 aa).

Residues 1-24 (MRFYYTLLATAAALLVHSDALSAA) form the signal peptide. Positions 44-60 (RFLRRHTDSETTDNEER) match the RxLR-dEER motif.

This sequence belongs to the RxLR effector family.

The protein localises to the secreted. It is found in the host cell. Functionally, secreted effector that partially suppresses elicitor-induced cell death in host and enhances virulence of P.parasitica. This Phytophthora nicotianae (Potato buckeye rot agent) protein is Secreted RxLR effector protein 5.